We begin with the raw amino-acid sequence, 915 residues long: Bifunctional uridylyltransferase/uridylyl-removing enzyme (915 aa).

The uridylyltransferase stretch occupies residues methionine 1–proline 360. Residues isoleucine 361–valine 731 are uridylyl-removing. Residues valine 478 to valine 594 enclose the HD domain. ACT domains are found at residues glutamine 732 to arginine 817 and isoleucine 840 to isoleucine 915.

Belongs to the GlnD family. Mg(2+) serves as cofactor.

It catalyses the reaction [protein-PII]-L-tyrosine + UTP = [protein-PII]-uridylyl-L-tyrosine + diphosphate. The enzyme catalyses [protein-PII]-uridylyl-L-tyrosine + H2O = [protein-PII]-L-tyrosine + UMP + H(+). Its activity is regulated as follows. Uridylyltransferase (UTase) activity is inhibited by glutamine, while glutamine activates uridylyl-removing (UR) activity. Modifies, by uridylylation and deuridylylation, the PII regulatory proteins (GlnB and homologs), in response to the nitrogen status of the cell that GlnD senses through the glutamine level. Under low glutamine levels, catalyzes the conversion of the PII proteins and UTP to PII-UMP and PPi, while under higher glutamine levels, GlnD hydrolyzes PII-UMP to PII and UMP (deuridylylation). Thus, controls uridylylation state and activity of the PII proteins, and plays an important role in the regulation of nitrogen assimilation and metabolism. This is Bifunctional uridylyltransferase/uridylyl-removing enzyme from Psychrobacter arcticus (strain DSM 17307 / VKM B-2377 / 273-4).